The chain runs to 219 residues: MSRISKSEMSRLLSVYFIMGSNNCTKDPLQVLREALEGGITIFQFREKGEGALTEEKRICFAKELQAICKEYGVPFIVNDDVELALELDADGVHVGQDDEGITSVREKMGDKIVGVSTHTIEEARWAIENGADYLGVGPIFPTSTKKDTKAVQGTKGLAHFREQGITIPIVGIGGISIENTASVIEAGADGVSVISAISLAESAYESTKRLVEEVSNSL.

4-amino-2-methyl-5-(diphosphooxymethyl)pyrimidine is bound by residues 44-48 (QFREK) and asparagine 79. Residues aspartate 80 and aspartate 99 each contribute to the Mg(2+) site. Serine 117 contributes to the 4-amino-2-methyl-5-(diphosphooxymethyl)pyrimidine binding site. A 2-[(2R,5Z)-2-carboxy-4-methylthiazol-5(2H)-ylidene]ethyl phosphate-binding site is contributed by 143–145 (TST). Lysine 146 is a 4-amino-2-methyl-5-(diphosphooxymethyl)pyrimidine binding site. 2-[(2R,5Z)-2-carboxy-4-methylthiazol-5(2H)-ylidene]ethyl phosphate is bound by residues glycine 175 and 195-196 (IS).

The protein belongs to the thiamine-phosphate synthase family. Mg(2+) is required as a cofactor.

The catalysed reaction is 2-[(2R,5Z)-2-carboxy-4-methylthiazol-5(2H)-ylidene]ethyl phosphate + 4-amino-2-methyl-5-(diphosphooxymethyl)pyrimidine + 2 H(+) = thiamine phosphate + CO2 + diphosphate. It catalyses the reaction 2-(2-carboxy-4-methylthiazol-5-yl)ethyl phosphate + 4-amino-2-methyl-5-(diphosphooxymethyl)pyrimidine + 2 H(+) = thiamine phosphate + CO2 + diphosphate. The enzyme catalyses 4-methyl-5-(2-phosphooxyethyl)-thiazole + 4-amino-2-methyl-5-(diphosphooxymethyl)pyrimidine + H(+) = thiamine phosphate + diphosphate. Its pathway is cofactor biosynthesis; thiamine diphosphate biosynthesis; thiamine phosphate from 4-amino-2-methyl-5-diphosphomethylpyrimidine and 4-methyl-5-(2-phosphoethyl)-thiazole: step 1/1. Functionally, condenses 4-methyl-5-(beta-hydroxyethyl)thiazole monophosphate (THZ-P) and 2-methyl-4-amino-5-hydroxymethyl pyrimidine pyrophosphate (HMP-PP) to form thiamine monophosphate (TMP). This Bacillus cereus (strain AH187) protein is Thiamine-phosphate synthase.